Reading from the N-terminus, the 660-residue chain is Methionine--tRNA ligase 1 (660 aa).

The short motif at 15–25 (YYPSGKLHIGH) is the 'HIGH' region element. Residues 310–314 (KMSKS) carry the 'KMSKS' region motif. Lys313 is a binding site for ATP. Positions 560–660 (DFFKVELRVA…QNIPNGTKIK (101 aa)) constitute a tRNA-binding domain.

The protein belongs to the class-I aminoacyl-tRNA synthetase family. MetG type 2B subfamily. Homodimer.

The protein localises to the cytoplasm. The enzyme catalyses tRNA(Met) + L-methionine + ATP = L-methionyl-tRNA(Met) + AMP + diphosphate. Functionally, is required not only for elongation of protein synthesis but also for the initiation of all mRNA translation through initiator tRNA(fMet) aminoacylation. The sequence is that of Methionine--tRNA ligase 1 from Bacillus anthracis.